The chain runs to 59 residues: uncharacterized protein (59 aa).

The signal sequence occupies residues 1–17 (MIASIWYAELGCASAIA).

This is an uncharacterized protein from Rickettsia prowazekii (strain Madrid E).